Here is a 143-residue protein sequence, read N- to C-terminus: Large-conductance mechanosensitive channel (143 aa).

3 helical membrane-spanning segments follow: residues 10–30 (FAIKGNMMDLAIGVIIGGAFG), 40–60 (IIMPLITVITGGGVDFSQKFI), and 86–106 (GNFLTILINFLILAWVVFLMV).

It belongs to the MscL family. As to quaternary structure, homopentamer.

It is found in the cell inner membrane. Its function is as follows. Channel that opens in response to stretch forces in the membrane lipid bilayer. May participate in the regulation of osmotic pressure changes within the cell. The polypeptide is Large-conductance mechanosensitive channel (Acinetobacter baumannii (strain ATCC 17978 / DSM 105126 / CIP 53.77 / LMG 1025 / NCDC KC755 / 5377)).